The following is a 153-amino-acid chain: uncharacterized protein (153 aa).

The interval Met1–Gly88 is disordered.

This is an uncharacterized protein from Epstein-Barr virus (strain P3HR-1) (HHV-4).